Reading from the N-terminus, the 229-residue chain is Vitellogenin (229 aa).

Residues Ile-1–Arg-136 form the VWFD domain. Asn-198 carries an N-linked (GlcNAc...) asparagine glycan.

Expressed in liver, ovary and, to a lesser extent, in muscle, intestine, skin, kidney and heart.

Precursor of the egg-yolk proteins that are sources of nutrients during early development of oviparous organisms. Its function is as follows. Probably binds tetrodotoxin in the ovary. The protein is Vitellogenin of Takifugu pardalis (Panther puffer).